Here is a 587-residue protein sequence, read N- to C-terminus: Prolycopene isomerase 1, chloroplastic (587 aa).

Low complexity predominate over residues 1-13 (MLCLSLNSSSTSP). The interval 1–21 (MLCLSLNSSSTSPPKSPLHHS) is disordered. A chloroplast-targeting transit peptide spans 1 to 50 (MLCLSLNSSSTSPPKSPLHHSFSRRSMRSWVCSPRVQRKKLGFWSSPKAV).

Belongs to the carotenoid/retinoid oxidoreductase family. CrtISO subfamily. The cofactor is NAD(+). NADP(+) serves as cofactor. It depends on FAD as a cofactor. Up-regulated in the flower buds and flower lip tissue, while it is weakly expressed in leaves.

It is found in the plastid. It localises to the chloroplast membrane. The catalysed reaction is 7,7',9,9'-tetra-cis-lycopene = all-trans-lycopene. It functions in the pathway carotenoid biosynthesis; lycopene biosynthesis. Carotene cis-trans-isomerase that converts 7,9,9'-tri-cis-neurosporene to 9'-cis-neurosporene and 7,9,9',7'-tetra-cis-lycopene (also known as prolycopene) into all-trans-lycopene. Isomerization requires redox-active components, suggesting that isomerization is achieved by a reversible redox reaction acting at specific double bonds. Isomerizes adjacent cis-double bonds at C7 and C9 pairwise into the trans-configuration, but is incapable of isomerizing single cis-double bonds at C9 and C9'. The chain is Prolycopene isomerase 1, chloroplastic (CRTISO1) from Oncidium hybrid cultivar (Orchid).